The following is a 983-amino-acid chain: Glycine dehydrogenase (decarboxylating) (983 aa).

The residue at position 726 (Lys-726) is an N6-(pyridoxal phosphate)lysine.

This sequence belongs to the GcvP family. As to quaternary structure, the glycine cleavage system is composed of four proteins: P, T, L and H. It depends on pyridoxal 5'-phosphate as a cofactor.

It carries out the reaction N(6)-[(R)-lipoyl]-L-lysyl-[glycine-cleavage complex H protein] + glycine + H(+) = N(6)-[(R)-S(8)-aminomethyldihydrolipoyl]-L-lysyl-[glycine-cleavage complex H protein] + CO2. Functionally, the glycine cleavage system catalyzes the degradation of glycine. The P protein binds the alpha-amino group of glycine through its pyridoxal phosphate cofactor; CO(2) is released and the remaining methylamine moiety is then transferred to the lipoamide cofactor of the H protein. The protein is Glycine dehydrogenase (decarboxylating) of Synechocystis sp. (strain ATCC 27184 / PCC 6803 / Kazusa).